A 368-amino-acid polypeptide reads, in one-letter code: tRNA(Met) cytidine acetate ligase (368 aa).

ATP is bound by residues 7–20 (IAEF…HKYL), glycine 96, asparagine 152, and arginine 175.

Belongs to the TmcAL family.

The protein localises to the cytoplasm. It carries out the reaction cytidine(34) in elongator tRNA(Met) + acetate + ATP = N(4)-acetylcytidine(34) in elongator tRNA(Met) + AMP + diphosphate. Functionally, catalyzes the formation of N(4)-acetylcytidine (ac(4)C) at the wobble position of elongator tRNA(Met), using acetate and ATP as substrates. First activates an acetate ion to form acetyladenylate (Ac-AMP) and then transfers the acetyl group to tRNA to form ac(4)C34. In Streptococcus pyogenes serotype M4 (strain MGAS10750), this protein is tRNA(Met) cytidine acetate ligase.